We begin with the raw amino-acid sequence, 194 residues long: dTTP/UTP pyrophosphatase (194 aa).

D76 serves as the catalytic Proton acceptor.

Belongs to the Maf family. YhdE subfamily. Requires a divalent metal cation as cofactor.

The protein localises to the cytoplasm. The catalysed reaction is dTTP + H2O = dTMP + diphosphate + H(+). The enzyme catalyses UTP + H2O = UMP + diphosphate + H(+). Functionally, nucleoside triphosphate pyrophosphatase that hydrolyzes dTTP and UTP. May have a dual role in cell division arrest and in preventing the incorporation of modified nucleotides into cellular nucleic acids. The protein is dTTP/UTP pyrophosphatase of Shewanella oneidensis (strain ATCC 700550 / JCM 31522 / CIP 106686 / LMG 19005 / NCIMB 14063 / MR-1).